The primary structure comprises 393 residues: Formate-dependent phosphoribosylglycinamide formyltransferase (393 aa).

N(1)-(5-phospho-beta-D-ribosyl)glycinamide-binding positions include 22–23 and Glu-82; that span reads EL. ATP is bound by residues Arg-114, Lys-155, 160–165, 195–198, and Glu-203; these read SSGKGQ and EGFI. Residues 119–308 form the ATP-grasp domain; it reads RLAAEELGLP…EFALHARAIL (190 aa). Residues Glu-267 and Glu-279 each coordinate Mg(2+). Residues Asp-286, Lys-356, and 363–364 contribute to the N(1)-(5-phospho-beta-D-ribosyl)glycinamide site; that span reads RR.

The protein belongs to the PurK/PurT family. In terms of assembly, homodimer.

It catalyses the reaction N(1)-(5-phospho-beta-D-ribosyl)glycinamide + formate + ATP = N(2)-formyl-N(1)-(5-phospho-beta-D-ribosyl)glycinamide + ADP + phosphate + H(+). The protein operates within purine metabolism; IMP biosynthesis via de novo pathway; N(2)-formyl-N(1)-(5-phospho-D-ribosyl)glycinamide from N(1)-(5-phospho-D-ribosyl)glycinamide (formate route): step 1/1. Its function is as follows. Involved in the de novo purine biosynthesis. Catalyzes the transfer of formate to 5-phospho-ribosyl-glycinamide (GAR), producing 5-phospho-ribosyl-N-formylglycinamide (FGAR). Formate is provided by PurU via hydrolysis of 10-formyl-tetrahydrofolate. This is Formate-dependent phosphoribosylglycinamide formyltransferase from Azoarcus sp. (strain BH72).